The following is a 190-amino-acid chain: MEHEGKNNMNGMEMEKGKRELGSRKGVELTMRVLALILTMAAATVLGVAKQTKVVSIKLIPTLPPLDITTTAKASYLSAFVYNISVNAIACGYTAISIAILMISRGRRSKKLLMVVLLGDLVMVALLFSGTGAASAIGLMGLHGNKHVMWKKVCGVFGKFCHRAAPSLPLTLLAAVVFMFLVVLDAIKLP.

Positions 1 to 21 are disordered; it reads MEHEGKNNMNGMEMEKGKREL. The Cytoplasmic segment spans residues 1 to 28; it reads MEHEGKNNMNGMEMEKGKRELGSRKGVE. Residues 29–49 form a helical membrane-spanning segment; it reads LTMRVLALILTMAAATVLGVA. The Extracellular segment spans residues 50–83; that stretch reads KQTKVVSIKLIPTLPPLDITTTAKASYLSAFVYN. Residues 84-104 traverse the membrane as a helical segment; that stretch reads ISVNAIACGYTAISIAILMIS. The Cytoplasmic portion of the chain corresponds to 105-111; that stretch reads RGRRSKK. A helical membrane pass occupies residues 112 to 132; it reads LLMVVLLGDLVMVALLFSGTG. Residues 133–163 are Extracellular-facing; the sequence is AASAIGLMGLHGNKHVMWKKVCGVFGKFCHR. A helical membrane pass occupies residues 164 to 184; sequence AAPSLPLTLLAAVVFMFLVVL. The Cytoplasmic portion of the chain corresponds to 185–190; it reads DAIKLP.

Belongs to the Casparian strip membrane proteins (CASP) family. Homodimer and heterodimers.

Its subcellular location is the cell membrane. This Arabidopsis thaliana (Mouse-ear cress) protein is CASP-like protein 1E2.